The primary structure comprises 250 residues: Kv channel-interacting protein 4 (250 aa).

Positions 2–44 (NVRRVESISAQLEEASSTGGFLYAQNNTKRSIKERLMKLLPCS) are KIS. Phosphoserine occurs at positions 17 and 56. The region spanning 61 to 117 (LEMATVRHRPEALELLEAQSKFTKKELQILYRGFKNECPSGVVNEETFKEIYSQFFP) is the EF-hand 1; degenerate domain. EF-hand domains are found at residues 120–155 (DSTT…LLRG), 156–191 (TVQE…IYDM), and 204–239 (APRQ…DENI). Residues D133, D135, N137, D144, D169, N171, D173, Y175, E180, D217, N219, D221, and E228 each contribute to the Ca(2+) site. Residues 237 to 250 (ENIMRSMQLFENVI) form an interaction with KCND2 region.

Belongs to the recoverin family. In terms of assembly, component of heteromultimeric potassium channels. Identified in potassium channel complexes containing KCND1, KCND2, KCND3, KCNIP1, KCNIP2, KCNIP3, KCNIP4, DPP6 and DPP10. Interacts with the C-terminus of PSEN2 and probably PSEN1. Interacts with KCND2 and KCND3. In terms of tissue distribution, expressed in brain. Highly expressed by neurons in layers II-IV of cortex and in hippocampus, thalamus and the Purkinje cell layer of the cerebellum.

The protein resides in the cell membrane. Its subcellular location is the cytoplasm. It localises to the peroxisome. Its function is as follows. Regulatory subunit of Kv4/D (Shal)-type voltage-gated rapidly inactivating A-type potassium channels, such as KCND2/Kv4.2 and KCND3/Kv4.3. Modulates channel expression at the cell membrane, gating characteristics, inactivation kinetics and rate of recovery from inactivation in a calcium-dependent and isoform-specific manner. This Mus musculus (Mouse) protein is Kv channel-interacting protein 4 (Kcnip4).